The primary structure comprises 338 residues: DNA-directed RNA polymerase subunit alpha (338 aa).

The interval 1–234 is alpha N-terminal domain (alpha-NTD); the sequence is MIERNWNELI…DQLQIFITFE (234 aa). The interval 250-338 is alpha C-terminal domain (alpha-CTD); sequence FNPALLKKVD…DLAKKFEDQI (89 aa).

Belongs to the RNA polymerase alpha chain family. As to quaternary structure, homodimer. The RNAP catalytic core consists of 2 alpha, 1 beta, 1 beta' and 1 omega subunit. When a sigma factor is associated with the core the holoenzyme is formed, which can initiate transcription.

The enzyme catalyses RNA(n) + a ribonucleoside 5'-triphosphate = RNA(n+1) + diphosphate. In terms of biological role, DNA-dependent RNA polymerase catalyzes the transcription of DNA into RNA using the four ribonucleoside triphosphates as substrates. In Caulobacter sp. (strain K31), this protein is DNA-directed RNA polymerase subunit alpha.